Reading from the N-terminus, the 115-residue chain is Protachykinin-1 (115 aa).

A signal peptide spans 1 to 19 (MKILVALAVLALVSTQLFA). A propeptide spanning residues 20–56 (EDIRANDDLNYWSDWSDSDQIKEELPEPFEHLLQRIA) is cleaved from the precursor. Methionine amide is present on residues M68 and M92.

Belongs to the tachykinin family. In terms of processing, the substance P form is cleaved at Pro-59 by the prolyl endopeptidase FAP (seprase) activity (in vitro). Substance P is also cleaved and degraded by Angiotensin-converting enzyme (ACE) and neprilysin (MME).

The protein resides in the secreted. In terms of biological role, tachykinins are active peptides which excite neurons, evoke behavioral responses, are potent vasodilators and secretagogues, and contract (directly or indirectly) many smooth muscles. The protein is Protachykinin-1 (TAC1) of Oryctolagus cuniculus (Rabbit).